The sequence spans 186 residues: Pyridoxal 5'-phosphate synthase subunit PdxT (186 aa).

46–48 (GES) contributes to the L-glutamine binding site. C75 serves as the catalytic Nucleophile. L-glutamine contacts are provided by residues R101 and 128 to 129 (IR). Active-site charge relay system residues include H165 and E167.

Belongs to the glutaminase PdxT/SNO family. As to quaternary structure, in the presence of PdxS, forms a dodecamer of heterodimers. Only shows activity in the heterodimer.

It catalyses the reaction aldehydo-D-ribose 5-phosphate + D-glyceraldehyde 3-phosphate + L-glutamine = pyridoxal 5'-phosphate + L-glutamate + phosphate + 3 H2O + H(+). It carries out the reaction L-glutamine + H2O = L-glutamate + NH4(+). It participates in cofactor biosynthesis; pyridoxal 5'-phosphate biosynthesis. Functionally, catalyzes the hydrolysis of glutamine to glutamate and ammonia as part of the biosynthesis of pyridoxal 5'-phosphate. The resulting ammonia molecule is channeled to the active site of PdxS. The chain is Pyridoxal 5'-phosphate synthase subunit PdxT from Methanocaldococcus jannaschii (strain ATCC 43067 / DSM 2661 / JAL-1 / JCM 10045 / NBRC 100440) (Methanococcus jannaschii).